Here is a 236-residue protein sequence, read N- to C-terminus: Ribose-5-phosphate isomerase A (236 aa).

Substrate is bound by residues 32–35 (TGST), 87–90 (DGSD), and 100–103 (KGGG). Catalysis depends on glutamate 109, which acts as the Proton acceptor. Lysine 127 contributes to the substrate binding site.

The protein belongs to the ribose 5-phosphate isomerase family. In terms of assembly, homodimer.

It catalyses the reaction aldehydo-D-ribose 5-phosphate = D-ribulose 5-phosphate. It participates in carbohydrate degradation; pentose phosphate pathway; D-ribose 5-phosphate from D-ribulose 5-phosphate (non-oxidative stage): step 1/1. Functionally, catalyzes the reversible conversion of ribose-5-phosphate to ribulose 5-phosphate. This is Ribose-5-phosphate isomerase A from Haloquadratum walsbyi (strain DSM 16790 / HBSQ001).